A 753-amino-acid polypeptide reads, in one-letter code: CCR4-NOT transcription complex subunit 3 (753 aa).

Positions 240–534 (ATSPPSHSHM…PPQFSTAPEI (295 aa)) are disordered. The span at 257–268 (SSSTPTSTTSSS) shows a compositional bias: low complexity. Residues 284 to 293 (DDKKRGRSTD) are compositionally biased toward basic and acidic residues. The residue at position 292 (Thr-292) is a Phosphothreonine. Positions 294–315 (SEVSQSPAKNGSKPVHSNQHPQ) are enriched in polar residues. At Ser-299 the chain carries Phosphoserine. Positions 317-330 (PAVPPTYPSGPPPA) are enriched in pro residues. Residues 350–376 (PSALGPKASPAPSHNSGTPAPYAQAVA) show a composition bias toward low complexity. Residues 396 to 408 (SGGGGGGSGGGGS) show a composition bias toward gly residues. The span at 424 to 433 (NGATSYSSVV) shows a compositional bias: polar residues. A compositionally biased stretch (low complexity) spans 441–457 (ALSSSGGNNASSQALGP). The segment covering 458-467 (PSGPHNPPPS) has biased composition (pro residues). Residues 479-491 (GAGGVAPGSGNNS) show a composition bias toward gly residues. Ser-542 carries the phosphoserine modification. A repressor domain region spans residues 661–753 (EFYQRLSTET…YRYLEDRDLQ (93 aa)).

Belongs to the CNOT2/3/5 family. Component of the CCR4-NOT complex; distinct complexes seem to exist that differ in the participation of probably mutually exclusive catalytic subunits. In the complex interacts directly with CNOT2. Interacts with TIP120B and NANOS2. Interacts with EBF1. Interacts in an RNA-independent manner with BICC1 (via KH domains). As to expression, ubiquitous. Highly expressed in brain, heart, thymus, spleen, kidney, liver, small intestine, lung and peripheral blood leukocytes.

It is found in the cytoplasm. The protein resides in the nucleus. Its subcellular location is the P-body. In terms of biological role, component of the CCR4-NOT complex which is one of the major cellular mRNA deadenylases and is linked to various cellular processes including bulk mRNA degradation, miRNA-mediated repression, translational repression during translational initiation and general transcription regulation. Additional complex functions may be a consequence of its influence on mRNA expression. May be involved in metabolic regulation; may be involved in recruitment of the CCR4-NOT complex to deadenylation target mRNAs involved in energy metabolism. Involved in mitotic progression and regulation of the spindle assembly checkpoint by regulating the stability of MAD1L1 mRNA. Can repress transcription and may link the CCR4-NOT complex to transcriptional regulation; the repressive function may involve histone deacetylases. Involved in the maintenance of embryonic stem (ES) cell identity. This Homo sapiens (Human) protein is CCR4-NOT transcription complex subunit 3.